Here is a 168-residue protein sequence, read N- to C-terminus: MNWMDIRIGQGYDVHALVEGRKLILGGVEIPHTRGLLGHSDADALLHAITDALFGAAGLGDIGRHFPDTDPAFAGADSRVLLREAVRRVHKAGYAVGNVDATVIAQKPKLAPHVPGMVANLAEDLGIAPERCNVKAKTNEKLGFEGKEEGIVAQAVVLIYRAEAAEQD.

Residues Asp-13 and His-15 each contribute to the a divalent metal cation site. 4-CDP-2-C-methyl-D-erythritol 2-phosphate contacts are provided by residues 13–15 (DVH) and 39–40 (HS). His-47 lines the a divalent metal cation pocket. Residues 61-63 (DIG), 66-70 (FPDTD), Phe-144, and Lys-147 each bind 4-CDP-2-C-methyl-D-erythritol 2-phosphate.

It belongs to the IspF family. In terms of assembly, homotrimer. The cofactor is a divalent metal cation.

The catalysed reaction is 4-CDP-2-C-methyl-D-erythritol 2-phosphate = 2-C-methyl-D-erythritol 2,4-cyclic diphosphate + CMP. Its pathway is isoprenoid biosynthesis; isopentenyl diphosphate biosynthesis via DXP pathway; isopentenyl diphosphate from 1-deoxy-D-xylulose 5-phosphate: step 4/6. Its function is as follows. Involved in the biosynthesis of isopentenyl diphosphate (IPP) and dimethylallyl diphosphate (DMAPP), two major building blocks of isoprenoid compounds. Catalyzes the conversion of 4-diphosphocytidyl-2-C-methyl-D-erythritol 2-phosphate (CDP-ME2P) to 2-C-methyl-D-erythritol 2,4-cyclodiphosphate (ME-CPP) with a corresponding release of cytidine 5-monophosphate (CMP). This is 2-C-methyl-D-erythritol 2,4-cyclodiphosphate synthase from Ralstonia pickettii (strain 12J).